The chain runs to 171 residues: UPF0312 protein SAR2769 (171 aa).

It belongs to the UPF0312 family.

The polypeptide is UPF0312 protein SAR2769 (Staphylococcus aureus (strain MRSA252)).